The chain runs to 310 residues: tRNA dimethylallyltransferase (310 aa).

10–17 (GPTAVGKS) is an ATP binding site. Substrate is bound at residue 12-17 (TAVGKS). 3 interaction with substrate tRNA regions span residues 35 to 38 (DSAQ), 159 to 163 (QRIQR), and 274 to 281 (KRQITWLR).

This sequence belongs to the IPP transferase family. As to quaternary structure, monomer. Requires Mg(2+) as cofactor.

The enzyme catalyses adenosine(37) in tRNA + dimethylallyl diphosphate = N(6)-dimethylallyladenosine(37) in tRNA + diphosphate. In terms of biological role, catalyzes the transfer of a dimethylallyl group onto the adenine at position 37 in tRNAs that read codons beginning with uridine, leading to the formation of N6-(dimethylallyl)adenosine (i(6)A). This is tRNA dimethylallyltransferase from Halorhodospira halophila (strain DSM 244 / SL1) (Ectothiorhodospira halophila (strain DSM 244 / SL1)).